A 238-amino-acid polypeptide reads, in one-letter code: Probable 2-phosphosulfolactate phosphatase (238 aa).

The protein belongs to the ComB family. Requires Mg(2+) as cofactor.

It catalyses the reaction (2R)-O-phospho-3-sulfolactate + H2O = (2R)-3-sulfolactate + phosphate. The polypeptide is Probable 2-phosphosulfolactate phosphatase (Clostridium botulinum (strain Alaska E43 / Type E3)).